Consider the following 296-residue polypeptide: Glutamate 5-kinase (296 aa).

An ATP-binding site is contributed by K15. Substrate-binding residues include S55, D159, and N186. Residues 206–207 and 248–254 contribute to the ATP site; these read SD and TGGIATK.

This sequence belongs to the glutamate 5-kinase family.

Its subcellular location is the cytoplasm. The enzyme catalyses L-glutamate + ATP = L-glutamyl 5-phosphate + ADP. It participates in amino-acid biosynthesis; L-proline biosynthesis; L-glutamate 5-semialdehyde from L-glutamate: step 1/2. Functionally, catalyzes the transfer of a phosphate group to glutamate to form L-glutamate 5-phosphate. This Treponema pallidum (strain Nichols) protein is Glutamate 5-kinase.